The chain runs to 179 residues: Large ribosomal subunit protein uL5 (179 aa).

This sequence belongs to the universal ribosomal protein uL5 family. In terms of assembly, part of the 50S ribosomal subunit; part of the 5S rRNA/L5/L18/L25 subcomplex. Contacts the 5S rRNA and the P site tRNA. Forms a bridge to the 30S subunit in the 70S ribosome.

Its function is as follows. This is one of the proteins that bind and probably mediate the attachment of the 5S RNA into the large ribosomal subunit, where it forms part of the central protuberance. In the 70S ribosome it contacts protein S13 of the 30S subunit (bridge B1b), connecting the 2 subunits; this bridge is implicated in subunit movement. Contacts the P site tRNA; the 5S rRNA and some of its associated proteins might help stabilize positioning of ribosome-bound tRNAs. This Aeromonas salmonicida (strain A449) protein is Large ribosomal subunit protein uL5.